The chain runs to 189 residues: Nucleoside triphosphate pyrophosphatase (189 aa).

The active-site Proton acceptor is D70.

Belongs to the Maf family. A divalent metal cation serves as cofactor.

Its subcellular location is the cytoplasm. It carries out the reaction a ribonucleoside 5'-triphosphate + H2O = a ribonucleoside 5'-phosphate + diphosphate + H(+). The catalysed reaction is a 2'-deoxyribonucleoside 5'-triphosphate + H2O = a 2'-deoxyribonucleoside 5'-phosphate + diphosphate + H(+). Its function is as follows. Nucleoside triphosphate pyrophosphatase. May have a dual role in cell division arrest and in preventing the incorporation of modified nucleotides into cellular nucleic acids. The chain is Nucleoside triphosphate pyrophosphatase from Xylella fastidiosa (strain 9a5c).